Consider the following 245-residue polypeptide: Ribosomal RNA small subunit methyltransferase G (245 aa).

Residues Gly85, Phe90, 108–110 (DST), 136–137 (AE), and Arg155 each bind S-adenosyl-L-methionine.

This sequence belongs to the methyltransferase superfamily. RNA methyltransferase RsmG family.

The protein localises to the cytoplasm. Functionally, specifically methylates the N7 position of a guanine in 16S rRNA. The protein is Ribosomal RNA small subunit methyltransferase G of Trichormus variabilis (strain ATCC 29413 / PCC 7937) (Anabaena variabilis).